The following is a 164-amino-acid chain: Large ribosomal subunit protein uL10 (164 aa).

This sequence belongs to the universal ribosomal protein uL10 family. As to quaternary structure, part of the ribosomal stalk of the 50S ribosomal subunit. The N-terminus interacts with L11 and the large rRNA to form the base of the stalk. The C-terminus forms an elongated spine to which L12 dimers bind in a sequential fashion forming a multimeric L10(L12)X complex.

Forms part of the ribosomal stalk, playing a central role in the interaction of the ribosome with GTP-bound translation factors. This is Large ribosomal subunit protein uL10 from Aliivibrio fischeri (strain MJ11) (Vibrio fischeri).